Reading from the N-terminus, the 151-residue chain is Late embryogenesis abundant protein Lea14-A (151 aa).

This sequence belongs to the LEA type 2 family.

The sequence is that of Late embryogenesis abundant protein Lea14-A (LEA14-A) from Gossypium hirsutum (Upland cotton).